A 508-amino-acid chain; its full sequence is Aldehyde dehydrogenase family 7 member B4 (508 aa).

244-249 (GSSRVG) is a binding site for NAD(+). Glu266 acts as the Proton acceptor in catalysis. Catalysis depends on Cys300, which acts as the Nucleophile.

This sequence belongs to the aldehyde dehydrogenase family. Homotetramer.

It catalyses the reaction an aldehyde + NAD(+) + H2O = a carboxylate + NADH + 2 H(+). This chain is Aldehyde dehydrogenase family 7 member B4 (ALDH7B4), found in Arabidopsis thaliana (Mouse-ear cress).